The following is a 233-amino-acid chain: Protein FAM204A (233 aa).

The interval 1–126 (MWSGLLPPGL…HSEPSSNETQ (126 aa)) is disordered. A compositionally biased stretch (acidic residues) spans 13–24 (SDAESNSEDEAT). A compositionally biased stretch (basic and acidic residues) spans 39-58 (ESIRKTEIIDFSTDEPKTET). Over residues 97 to 109 (FRGKRRKRSRKDK) the composition is skewed to basic residues. Positions 144 to 164 (VKRKKVEKSGLEKRIDQAVEE) form a coiled coil.

This is Protein FAM204A (FAM204A) from Homo sapiens (Human).